A 313-amino-acid chain; its full sequence is GMP synthase [glutamine-hydrolyzing] subunit B (313 aa).

The GMPS ATP-PPase domain occupies 6-190 (KVWEKFIEEK…LGLPEKIYNR (185 aa)). 33-39 (SGGVDSS) provides a ligand contact to ATP.

As to quaternary structure, heterodimer composed of a glutamine amidotransferase subunit (A) and a GMP-binding subunit (B).

It catalyses the reaction XMP + L-glutamine + ATP + H2O = GMP + L-glutamate + AMP + diphosphate + 2 H(+). The protein operates within purine metabolism; GMP biosynthesis; GMP from XMP (L-Gln route): step 1/1. Catalyzes the synthesis of GMP from XMP. This chain is GMP synthase [glutamine-hydrolyzing] subunit B (guaAB), found in Pyrococcus furiosus (strain ATCC 43587 / DSM 3638 / JCM 8422 / Vc1).